A 334-amino-acid chain; its full sequence is Holliday junction branch migration complex subunit RuvB (334 aa).

Positions 1–182 (MDERLVSSEL…FGVLSRLEYY (182 aa)) are large ATPase domain (RuvB-L). ATP-binding positions include L21, R22, G63, K66, T67, T68, 129–131 (EDF), R172, Y182, and R219. T67 lines the Mg(2+) pocket. The interval 183–253 (TRDELSEIVI…VAVDALERLQ (71 aa)) is small ATPAse domain (RuvB-S). A head domain (RuvB-H) region spans residues 256–334 (KLGLDHIDRK…HFKMEVPNHD (79 aa)). DNA-binding residues include R311 and R316.

Belongs to the RuvB family. As to quaternary structure, homohexamer. Forms an RuvA(8)-RuvB(12)-Holliday junction (HJ) complex. HJ DNA is sandwiched between 2 RuvA tetramers; dsDNA enters through RuvA and exits via RuvB. An RuvB hexamer assembles on each DNA strand where it exits the tetramer. Each RuvB hexamer is contacted by two RuvA subunits (via domain III) on 2 adjacent RuvB subunits; this complex drives branch migration. In the full resolvosome a probable DNA-RuvA(4)-RuvB(12)-RuvC(2) complex forms which resolves the HJ.

The protein localises to the cytoplasm. It carries out the reaction ATP + H2O = ADP + phosphate + H(+). In terms of biological role, the RuvA-RuvB-RuvC complex processes Holliday junction (HJ) DNA during genetic recombination and DNA repair, while the RuvA-RuvB complex plays an important role in the rescue of blocked DNA replication forks via replication fork reversal (RFR). RuvA specifically binds to HJ cruciform DNA, conferring on it an open structure. The RuvB hexamer acts as an ATP-dependent pump, pulling dsDNA into and through the RuvAB complex. RuvB forms 2 homohexamers on either side of HJ DNA bound by 1 or 2 RuvA tetramers; 4 subunits per hexamer contact DNA at a time. Coordinated motions by a converter formed by DNA-disengaged RuvB subunits stimulates ATP hydrolysis and nucleotide exchange. Immobilization of the converter enables RuvB to convert the ATP-contained energy into a lever motion, pulling 2 nucleotides of DNA out of the RuvA tetramer per ATP hydrolyzed, thus driving DNA branch migration. The RuvB motors rotate together with the DNA substrate, which together with the progressing nucleotide cycle form the mechanistic basis for DNA recombination by continuous HJ branch migration. Branch migration allows RuvC to scan DNA until it finds its consensus sequence, where it cleaves and resolves cruciform DNA. The sequence is that of Holliday junction branch migration complex subunit RuvB from Bacillus licheniformis (strain ATCC 14580 / DSM 13 / JCM 2505 / CCUG 7422 / NBRC 12200 / NCIMB 9375 / NCTC 10341 / NRRL NRS-1264 / Gibson 46).